We begin with the raw amino-acid sequence, 185 residues long: Cytidylate kinase (185 aa).

8–16 contacts ATP; the sequence is GPPGSGKTT.

This sequence belongs to the cytidylate kinase family. Type 2 subfamily.

It localises to the cytoplasm. The catalysed reaction is CMP + ATP = CDP + ADP. The enzyme catalyses dCMP + ATP = dCDP + ADP. This Desulfurococcus amylolyticus (strain DSM 18924 / JCM 16383 / VKM B-2413 / 1221n) (Desulfurococcus kamchatkensis) protein is Cytidylate kinase.